The chain runs to 142 residues: MVLSSADKNNVKACWGKIGSHAGEYGAEALERTFCSFPTTKTYFPHFDLSHGSAQVQAHGQKVADALTKAVVHINDLPNALSDLSDLHAYKLRVDPVNFKFLSHCLLVTLACHHPEEFTPAVHASLDKFFSAVSTVLTSKYR.

Residues V2–R142 enclose the Globin domain. S4 carries the post-translational modification Phosphoserine. An N6-succinyllysine mark is found at K8 and K12. At K17 the chain carries N6-acetyllysine; alternate. K17 is modified (N6-succinyllysine; alternate). Y25 is modified (phosphotyrosine). S36 carries the phosphoserine modification. N6-succinyllysine is present on K41. S50 carries the post-translational modification Phosphoserine. H59 serves as a coordination point for O2. H88 is a binding site for heme b. S103 bears the Phosphoserine mark. Residue T109 is modified to Phosphothreonine. S125 is modified (phosphoserine). A phosphothreonine mark is found at T135 and T138. S139 is modified (phosphoserine).

The protein belongs to the globin family. In terms of assembly, heterotetramer of two alpha chains and two beta chains. In terms of tissue distribution, red blood cells.

Its function is as follows. Involved in oxygen transport from the lung to the various peripheral tissues. Hemopressin acts as an antagonist peptide of the cannabinoid receptor CNR1. Hemopressin-binding efficiently blocks cannabinoid receptor CNR1 and subsequent signaling. The chain is Hemoglobin subunit alpha (HBA) from Panthera leo (Lion).